The following is a 500-amino-acid chain: Cytochrome P450 71B34 (500 aa).

Residues 1–21 (MTNIWLLSLIFVICILVAVFN) form a helical membrane-spanning segment. Cys440 lines the heme pocket.

It belongs to the cytochrome P450 family. It depends on heme as a cofactor.

It is found in the membrane. This is Cytochrome P450 71B34 (CYP71B34) from Arabidopsis thaliana (Mouse-ear cress).